The primary structure comprises 195 residues: GRF1-interacting factor 2 (195 aa).

The interval 166–195 (QQPETGLGGNVGLRGGKQDGADGQGKDDGK) is disordered. Over residues 171-180 (GLGGNVGLRG) the composition is skewed to gly residues. Residues 181 to 195 (GKQDGADGQGKDDGK) are compositionally biased toward basic and acidic residues.

The protein belongs to the SS18 family. Interacts with GRF1. In terms of tissue distribution, predominantly expressed in shoot tips containing the shoot apical meristem (SAM) and flower buds. Also expressed in mature flowers.

Transcription coactivator that plays a role in the regulation of cell expansion in leaf and cotyledons tissues. Component of a network formed by miR396, the GRFs and their interacting factors (GIFs) acting in the regulation of meristem function, at least partially through the control of cell proliferation. GIFs are involved in the positive regulation of cell proliferation of lateral organs in a functionally redundant manner. The chain is GRF1-interacting factor 2 (GIF2) from Arabidopsis thaliana (Mouse-ear cress).